The following is a 225-amino-acid chain: Uridylate kinase (225 aa).

9–10 (GS) is an ATP binding site. Position 46 (glycine 46) interacts with UMP. 2 residues coordinate ATP: glycine 47 and arginine 51. UMP contacts are provided by residues aspartate 67 and 115–121 (THPAHTT). Residues threonine 141, asparagine 142, tyrosine 147, and aspartate 150 each contribute to the ATP site.

The protein belongs to the UMP kinase family. As to quaternary structure, homohexamer.

The protein localises to the cytoplasm. It carries out the reaction UMP + ATP = UDP + ADP. The protein operates within pyrimidine metabolism; CTP biosynthesis via de novo pathway; UDP from UMP (UMPK route): step 1/1. Its activity is regulated as follows. Inhibited by UTP. Catalyzes the reversible phosphorylation of UMP to UDP. This is Uridylate kinase from Methanococcus maripaludis (strain C7 / ATCC BAA-1331).